The following is a 65-amino-acid chain: Large ribosomal subunit protein bL33 (65 aa).

Residues 20–42 (APASEKRSPGVSRYTTEKNRRNT) are disordered.

This sequence belongs to the bacterial ribosomal protein bL33 family.

This chain is Large ribosomal subunit protein bL33, found in Prochlorococcus marinus (strain SARG / CCMP1375 / SS120).